The chain runs to 213 residues: ATP phosphoribosyltransferase (213 aa).

It belongs to the ATP phosphoribosyltransferase family. Short subfamily. As to quaternary structure, heteromultimer composed of HisG and HisZ subunits.

Its subcellular location is the cytoplasm. It carries out the reaction 1-(5-phospho-beta-D-ribosyl)-ATP + diphosphate = 5-phospho-alpha-D-ribose 1-diphosphate + ATP. It participates in amino-acid biosynthesis; L-histidine biosynthesis; L-histidine from 5-phospho-alpha-D-ribose 1-diphosphate: step 1/9. Functionally, catalyzes the condensation of ATP and 5-phosphoribose 1-diphosphate to form N'-(5'-phosphoribosyl)-ATP (PR-ATP). Has a crucial role in the pathway because the rate of histidine biosynthesis seems to be controlled primarily by regulation of HisG enzymatic activity. The sequence is that of ATP phosphoribosyltransferase from Shouchella clausii (strain KSM-K16) (Alkalihalobacillus clausii).